The chain runs to 205 residues: MSKRESSKYKIDRRMGENIWGRPKSPVNRREYGPGQHGQRRKSKLSDFGVQLRAKQKLKGYYGDIREKQFRAIFAEASRRKGDTPENLIGLLESRLDAIVYRAKFVPTVFAARQFVNHGHVKVNGVRVNIGSYRCKAGDVIEVKEKSKQLVSVLESVQLAERDVPDYIEADHNKMVATFVRVPALTDVPYPVVMEPHLVVEFYSR.

A compositionally biased stretch (basic and acidic residues) spans 1-16 (MSKRESSKYKIDRRMG). The disordered stretch occupies residues 1–46 (MSKRESSKYKIDRRMGENIWGRPKSPVNRREYGPGQHGQRRKSKLS). Residues 94–157 (SRLDAIVYRA…KQLVSVLESV (64 aa)) form the S4 RNA-binding domain.

Belongs to the universal ribosomal protein uS4 family. In terms of assembly, part of the 30S ribosomal subunit. Contacts protein S5. The interaction surface between S4 and S5 is involved in control of translational fidelity.

One of the primary rRNA binding proteins, it binds directly to 16S rRNA where it nucleates assembly of the body of the 30S subunit. In terms of biological role, with S5 and S12 plays an important role in translational accuracy. The chain is Small ribosomal subunit protein uS4 from Sinorhizobium fredii (strain NBRC 101917 / NGR234).